Here is a 311-residue protein sequence, read N- to C-terminus: Ribonuclease HIII (311 aa).

Residues 95–311 (MSIVGSDEVG…NTEKAFRLLK (217 aa)) form the RNase H type-2 domain. A divalent metal cation is bound by residues D101, E102, and D206.

This sequence belongs to the RNase HII family. RnhC subfamily. Mn(2+) is required as a cofactor. The cofactor is Mg(2+).

The protein resides in the cytoplasm. It carries out the reaction Endonucleolytic cleavage to 5'-phosphomonoester.. Its function is as follows. Endonuclease that specifically degrades the RNA of RNA-DNA hybrids. This Bacillus cereus (strain AH187) protein is Ribonuclease HIII.